The chain runs to 51 residues: Large ribosomal subunit protein bL33 (51 aa).

The protein belongs to the bacterial ribosomal protein bL33 family.

The sequence is that of Large ribosomal subunit protein bL33 from Marinobacter nauticus (strain ATCC 700491 / DSM 11845 / VT8) (Marinobacter aquaeolei).